Here is a 505-residue protein sequence, read N- to C-terminus: Beta-agarase (505 aa).

The N-terminal stretch at M1–A23 is a signal peptide. E200 (proton donor) is an active-site residue. E322 serves as the catalytic Nucleophile.

This sequence belongs to the glycosyl hydrolase 86 family.

The protein localises to the secreted. The enzyme catalyses Hydrolysis of (1-&gt;4)-beta-D-galactosidic linkages in agarose, giving the tetramer as the predominant product.. Its function is as follows. Hydrolase that cleaves agar at the (1-&gt;4) linkage, producing tetrameric saccharide molecules. Is specific for agar and agarose and does not digest alginate or carrageenan. The chain is Beta-agarase from Pseudoalteromonas atlantica (Alteromonas atlantica).